A 228-amino-acid polypeptide reads, in one-letter code: Ribonuclease HII (228 aa).

In terms of domain architecture, RNase H type-2 spans 26 to 214 (RAVAGVDEVG…VRAHSRFPLD (189 aa)). Residues Asp-32, Glu-33, and Asp-124 each coordinate a divalent metal cation.

This sequence belongs to the RNase HII family. The cofactor is Mn(2+). Mg(2+) is required as a cofactor.

Its subcellular location is the cytoplasm. It carries out the reaction Endonucleolytic cleavage to 5'-phosphomonoester.. Its function is as follows. Endonuclease that specifically degrades the RNA of RNA-DNA hybrids. The chain is Ribonuclease HII from Solibacter usitatus (strain Ellin6076).